A 215-amino-acid chain; its full sequence is DNA repair and recombination protein RadB (215 aa).

The protein belongs to the eukaryotic RecA-like protein family. RadB subfamily.

In terms of biological role, involved in DNA repair and in homologous recombination. May regulate the cleavage reactions of the branch-structured DNA. Has a very weak ATPase activity that is not stimulated by DNA. Binds DNA but does not promote DNA strands exchange. The protein is DNA repair and recombination protein RadB of Methanococcus maripaludis (strain C7 / ATCC BAA-1331).